Here is a 574-residue protein sequence, read N- to C-terminus: Sorting nexin-33 (574 aa).

Positions Met-1–Pro-61 constitute an SH3 domain. The residue at position 77 (Ser-77) is a Phosphoserine. Over residues Gly-79 to Met-90 the composition is skewed to polar residues. The tract at residues Gly-79–Asp-116 is disordered. Ser-92 is modified (phosphoserine). The PX domain occupies Phe-230–Gln-340. Residues Leu-371–Leu-574 enclose the BAR domain.

The protein belongs to the sorting nexin family. In terms of assembly, homodimer (via BAR domain). Interacts with ADAM15. Interacts with FASLG. Interacts (via SH3 domain) with DNM1 and DNM2. Interacts with WASL. Interacts with FCHSD1 (via the F-BAR domain). Post-translationally, phosphorylated. As to expression, detected in brain (at protein level).

The protein localises to the cytoplasm. The protein resides in the cytosol. Its subcellular location is the membrane. It is found in the cytoplasmic vesicle membrane. Plays a role in the reorganization of the cytoskeleton, endocytosis and cellular vesicle trafficking via its interactions with membranes, WASL, DNM1 and DNM2. Acts both during interphase and at the end of mitotic cell divisions. Required for efficient progress through mitosis and cytokinesis. Required for normal formation of the cleavage furrow at the end of mitosis. Modulates endocytosis of cell-surface proteins, such as APP and PRNP; this then modulates the secretion of APP and PRNP peptides. Promotes membrane tubulation (in vitro). May promote the formation of macropinosomes. This Mus musculus (Mouse) protein is Sorting nexin-33 (Snx33).